Reading from the N-terminus, the 216-residue chain is ATP phosphoribosyltransferase (216 aa).

This sequence belongs to the ATP phosphoribosyltransferase family. Short subfamily. Heteromultimer composed of HisG and HisZ subunits.

The protein resides in the cytoplasm. The enzyme catalyses 1-(5-phospho-beta-D-ribosyl)-ATP + diphosphate = 5-phospho-alpha-D-ribose 1-diphosphate + ATP. The protein operates within amino-acid biosynthesis; L-histidine biosynthesis; L-histidine from 5-phospho-alpha-D-ribose 1-diphosphate: step 1/9. Catalyzes the condensation of ATP and 5-phosphoribose 1-diphosphate to form N'-(5'-phosphoribosyl)-ATP (PR-ATP). Has a crucial role in the pathway because the rate of histidine biosynthesis seems to be controlled primarily by regulation of HisG enzymatic activity. This is ATP phosphoribosyltransferase from Synechococcus sp. (strain CC9902).